A 377-amino-acid polypeptide reads, in one-letter code: Chaperone protein DnaJ (377 aa).

The J domain maps to 5–70 (DYYEVLGLQK…QKRAAYDQYG (66 aa)). A CR-type zinc finger spans residues 134–212 (GCKKDIRLST…CHGDGRVQKA (79 aa)). The Zn(2+) site is built by Cys-147, Cys-150, Cys-164, Cys-167, Cys-186, Cys-189, Cys-200, and Cys-203. 4 CXXCXGXG motif repeats span residues 147 to 154 (CDNCHGTG), 164 to 171 (CPHCHGAG), 186 to 193 (CPSCHGTG), and 200 to 207 (CHSCHGDG).

This sequence belongs to the DnaJ family. In terms of assembly, homodimer. It depends on Zn(2+) as a cofactor.

It is found in the cytoplasm. Functionally, participates actively in the response to hyperosmotic and heat shock by preventing the aggregation of stress-denatured proteins and by disaggregating proteins, also in an autonomous, DnaK-independent fashion. Unfolded proteins bind initially to DnaJ; upon interaction with the DnaJ-bound protein, DnaK hydrolyzes its bound ATP, resulting in the formation of a stable complex. GrpE releases ADP from DnaK; ATP binding to DnaK triggers the release of the substrate protein, thus completing the reaction cycle. Several rounds of ATP-dependent interactions between DnaJ, DnaK and GrpE are required for fully efficient folding. Also involved, together with DnaK and GrpE, in the DNA replication of plasmids through activation of initiation proteins. This Haemophilus ducreyi (strain 35000HP / ATCC 700724) protein is Chaperone protein DnaJ.